The primary structure comprises 805 residues: 1,4-alpha-glucan-branching enzyme 2-2, chloroplastic/amyloplastic (805 aa).

A chloroplast-targeting transit peptide spans 1-32 (MVVIHGVSLTPRFTLPSRPLNTGFNAGNSTLS). The Nucleophile role is filled by aspartate 451. Glutamate 506 serves as the catalytic Proton donor.

It belongs to the glycosyl hydrolase 13 family. GlgB subfamily. As to quaternary structure, monomer. Expressed in seedlings, roots, stems, leaves, inflorescences, seeds and flowers.

The protein localises to the plastid. Its subcellular location is the chloroplast stroma. The protein resides in the amyloplast. It catalyses the reaction Transfers a segment of a (1-&gt;4)-alpha-D-glucan chain to a primary hydroxy group in a similar glucan chain.. Its pathway is glycan biosynthesis; starch biosynthesis. In terms of biological role, catalyzes the formation of the alpha-1,6-glucosidic linkages in starch by scission of a 1,4-alpha-linked oligosaccharide from growing alpha-1,4-glucan chains and the subsequent attachment of the oligosaccharide to the alpha-1,6 position. The chain is 1,4-alpha-glucan-branching enzyme 2-2, chloroplastic/amyloplastic (SBE2.2) from Arabidopsis thaliana (Mouse-ear cress).